We begin with the raw amino-acid sequence, 142 residues long: MKTFSIKSSNIKRHWYYVDATNKILGRLASALSFHLRGKHKTEYTPHLDTGDYIIVINASKILVTGNKRINKIYYHHTGYVGGIKQSRFEEMISSHPERVIEIAVKGMLPKGALGRSMFKKLKVFSNENHEHIAQCPQLLNI.

The protein belongs to the universal ribosomal protein uL13 family. Part of the 50S ribosomal subunit.

In terms of biological role, this protein is one of the early assembly proteins of the 50S ribosomal subunit, although it is not seen to bind rRNA by itself. It is important during the early stages of 50S assembly. The chain is Large ribosomal subunit protein uL13 from Buchnera aphidicola subsp. Acyrthosiphon pisum (strain 5A).